Consider the following 529-residue polypeptide: DNA-binding protein (529 aa).

Basic and acidic residues predominate over residues 1–17; sequence MASREEEQRETTPERGR. Disordered regions lie at residues 1–107 and 125–166; these read MASR…IVDS and PVLI…AESE. Residues 129–139 show a composition bias toward basic residues; it reads KHGKGGKRTVR. Acidic residues predominate over residues 155 to 165; sequence EEEEEPSEAES. Residue Tyr-195 is modified to Phosphotyrosine; by host. Zn(2+) contacts are provided by Cys-284 and His-286. Residues 297 to 331 are flexible loop; that stretch reads IEMDVTSENGQRALKEQSSKAKIVKNRWGRNVVQI. Positions 339, 355, 396, 398, 450, and 467 each coordinate Zn(2+). A C-terminal arm, DBP binding region spans residues 513–529; that stretch reads VSLPVAHSDARQNPFDF.

This sequence belongs to the adenoviridae E2A DNA-binding protein family. As to quaternary structure, homomultimerizes on viral ssDNA bound to pTP. Forms a initiation complex with viral polymerase, pTP and hosts NFIA and POU2F1/OCT1. Interacts with host SRCAP.

It is found in the host nucleus. In terms of biological role, plays a role in the elongation phase of viral strand displacement replication by unwinding the template in an ATP-independent fashion, employing its capacity to form multimers. Also enhances the rate of initiation. Released from template upon second strand synthesis. Assembles in complex with viral pTP, viral pol, host NFIA and host POU2F1/OCT1 on viral origin of replication. Covers the whole ssDNA genome during synthesis. The complementary strand synthesis induces its relese from DNA template. May inhibit cellular transcription mediated by the interaction between host SRCAP and CBP. This chain is DNA-binding protein, found in Human adenovirus C serotype 5 (HAdV-5).